The primary structure comprises 293 residues: 4-hydroxybenzoate octaprenyltransferase (293 aa).

Helical transmembrane passes span 26–46 (IGTL…AKGM), 49–69 (IKVL…GCII), 102–122 (LFAL…PLVV), 148–168 (FLGI…LGEV), 173–193 (WWLF…YAMI), 217–237 (WIAV…LSAE), 240–260 (FIYA…QRLI), and 272–292 (FLNN…DYLL).

Belongs to the UbiA prenyltransferase family. Requires Mg(2+) as cofactor.

It is found in the cell inner membrane. It catalyses the reaction all-trans-octaprenyl diphosphate + 4-hydroxybenzoate = 4-hydroxy-3-(all-trans-octaprenyl)benzoate + diphosphate. It functions in the pathway cofactor biosynthesis; ubiquinone biosynthesis. Functionally, catalyzes the prenylation of para-hydroxybenzoate (PHB) with an all-trans polyprenyl group. Mediates the second step in the final reaction sequence of ubiquinone-8 (UQ-8) biosynthesis, which is the condensation of the polyisoprenoid side chain with PHB, generating the first membrane-bound Q intermediate 3-octaprenyl-4-hydroxybenzoate. This chain is 4-hydroxybenzoate octaprenyltransferase, found in Shewanella denitrificans (strain OS217 / ATCC BAA-1090 / DSM 15013).